Here is a 458-residue protein sequence, read N- to C-terminus: ATP synthase subunit beta (458 aa).

148–155 (GGAGVGKT) serves as a coordination point for ATP.

It belongs to the ATPase alpha/beta chains family. F-type ATPases have 2 components, CF(1) - the catalytic core - and CF(0) - the membrane proton channel. CF(1) has five subunits: alpha(3), beta(3), gamma(1), delta(1), epsilon(1). CF(0) has three main subunits: a(1), b(2) and c(9-12). The alpha and beta chains form an alternating ring which encloses part of the gamma chain. CF(1) is attached to CF(0) by a central stalk formed by the gamma and epsilon chains, while a peripheral stalk is formed by the delta and b chains.

The protein resides in the cell inner membrane. The enzyme catalyses ATP + H2O + 4 H(+)(in) = ADP + phosphate + 5 H(+)(out). Its function is as follows. Produces ATP from ADP in the presence of a proton gradient across the membrane. The catalytic sites are hosted primarily by the beta subunits. The chain is ATP synthase subunit beta from Pseudomonas putida (strain W619).